The primary structure comprises 544 residues: Probable protein kinase UbiB (544 aa).

One can recognise a Protein kinase domain in the interval 123–505 (EFDEQALASA…GRQKSHNVRS (383 aa)). ATP is bound by residues 129–137 (LASASIAQV) and Lys156. Asp291 functions as the Proton acceptor in the catalytic mechanism. Residues 522–540 (LPLWLSCGTLVTVLLVLLL) traverse the membrane as a helical segment.

The protein belongs to the ABC1 family. UbiB subfamily.

The protein localises to the cell inner membrane. The protein operates within cofactor biosynthesis; ubiquinone biosynthesis [regulation]. Is probably a protein kinase regulator of UbiI activity which is involved in aerobic coenzyme Q (ubiquinone) biosynthesis. This is Probable protein kinase UbiB from Actinobacillus pleuropneumoniae serotype 7 (strain AP76).